The chain runs to 387 residues: Pyrophosphate--fructose 6-phosphate 1-phosphotransferase 3 (387 aa).

A diphosphate-binding site is contributed by Gly15. Asp114 is a binding site for Mg(2+). Substrate is bound by residues Thr140–Asp142, Met186–Arg188, Glu247, and Tyr308–Arg311. Residue Asp142 is the Proton acceptor of the active site.

It belongs to the phosphofructokinase type A (PFKA) family. PPi-dependent PFK group II subfamily. Clade 'Short' sub-subfamily. As to quaternary structure, homotetramer. Requires Mg(2+) as cofactor.

It is found in the cytoplasm. The catalysed reaction is beta-D-fructose 6-phosphate + diphosphate = beta-D-fructose 1,6-bisphosphate + phosphate + H(+). It functions in the pathway carbohydrate degradation; glycolysis; D-glyceraldehyde 3-phosphate and glycerone phosphate from D-glucose: step 3/4. Non-allosteric. Functionally, catalyzes the phosphorylation of D-fructose 6-phosphate, the first committing step of glycolysis. Uses inorganic phosphate (PPi) as phosphoryl donor instead of ATP like common ATP-dependent phosphofructokinases (ATP-PFKs), which renders the reaction reversible, and can thus function both in glycolysis and gluconeogenesis. Consistently, PPi-PFK can replace the enzymes of both the forward (ATP-PFK) and reverse (fructose-bisphosphatase (FBPase)) reactions. This is Pyrophosphate--fructose 6-phosphate 1-phosphotransferase 3 (pfk3) from Trichomonas vaginalis (strain ATCC PRA-98 / G3).